A 306-amino-acid chain; its full sequence is D-alanine--D-alanine ligase B (306 aa).

Active-site residues include glutamate 15 and serine 150. The region spanning 101-303 is the ATP-grasp domain; it reads KLLWQGAGLP…FSQLVVRILE (203 aa). 134-189 is an ATP binding site; it reads ISSLGLPVIVKPSREGSSVGMSKVVAENALQDALRLAFQHDEEVLIEKWLSGPEFT. The Mg(2+) site is built by aspartate 257, glutamate 270, and asparagine 272. Serine 281 is an active-site residue.

Belongs to the D-alanine--D-alanine ligase family. Monomer. The cofactor is Mg(2+). It depends on Mn(2+) as a cofactor.

Its subcellular location is the cytoplasm. The enzyme catalyses 2 D-alanine + ATP = D-alanyl-D-alanine + ADP + phosphate + H(+). Its pathway is cell wall biogenesis; peptidoglycan biosynthesis. Its function is as follows. Cell wall formation. In Escherichia coli O6:H1 (strain CFT073 / ATCC 700928 / UPEC), this protein is D-alanine--D-alanine ligase B.